The following is a 109-amino-acid chain: Flagellar hook-basal body complex protein FliE (109 aa).

It belongs to the FliE family.

Its subcellular location is the bacterial flagellum basal body. This chain is Flagellar hook-basal body complex protein FliE, found in Pseudomonas aeruginosa (strain LESB58).